We begin with the raw amino-acid sequence, 130 residues long: Large ribosomal subunit protein uL14 (130 aa).

It belongs to the universal ribosomal protein uL14 family. In terms of assembly, part of the 50S ribosomal subunit. Forms a cluster with proteins L3 and L19. In the 70S ribosome, L14 and L19 interact and together make contacts with the 16S rRNA in bridges B5 and B8.

Functionally, binds to 23S rRNA. Forms part of two intersubunit bridges in the 70S ribosome. This chain is Large ribosomal subunit protein uL14, found in Helicobacter pylori (strain P12).